Reading from the N-terminus, the 345-residue chain is Uroporphyrinogen decarboxylase (345 aa).

Residues 23–27 (RQAGR), aspartate 73, tyrosine 149, threonine 203, and histidine 319 contribute to the substrate site.

Belongs to the uroporphyrinogen decarboxylase family. As to quaternary structure, homodimer.

Its subcellular location is the cytoplasm. The enzyme catalyses uroporphyrinogen III + 4 H(+) = coproporphyrinogen III + 4 CO2. The protein operates within porphyrin-containing compound metabolism; protoporphyrin-IX biosynthesis; coproporphyrinogen-III from 5-aminolevulinate: step 4/4. Functionally, catalyzes the decarboxylation of four acetate groups of uroporphyrinogen-III to yield coproporphyrinogen-III. The chain is Uroporphyrinogen decarboxylase from Vesicomyosocius okutanii subsp. Calyptogena okutanii (strain HA).